The primary structure comprises 299 residues: rRNA methyltransferase (299 aa).

Residues 14-53 (AEKRSGRGRMAAARTTGAQSRKTAQRSGRSEADRRRRVHG) are disordered. The span at 21–31 (GRMAAARTTGA) shows a compositional bias: low complexity. Asn-55, Leu-57, Gly-82, Glu-103, Asp-128, and Asn-144 together coordinate S-adenosyl-L-methionine.

The protein belongs to the class I-like SAM-binding methyltransferase superfamily. rRNA adenine N(6)-methyltransferase family.

Its function is as follows. Probable RNA methylase. Confers resistance to carbomycin and several other macrolides, lincomycin and vernamycin B, but not to all macrolide-lincosamide-streptogramin B antibiotics. This chain is rRNA methyltransferase (carB), found in Streptomyces thermotolerans.